A 156-amino-acid chain; its full sequence is NPFLTSSVVNTGSSISAKTQDGIGNYAFNYGTANNARAEIGDAAGNKQGSYTITDVDGRARRVDYVADAAGFRASVKTNEPGTALSAPASAAIVSPYAPPVAPVAPAVAAPALAAAPLLAAPGIASYSTLIGHGAPLGYPLGAGLLAPGFAKTYVW.

In terms of domain architecture, Chitin-binding type R&amp;R spans 23 to 84 (IGNYAFNYGT…SVKTNEPGTA (62 aa)).

In terms of biological role, component of the rigid cuticle of the spider. This chain is Adult-specific rigid cuticular protein 15.5, found in Araneus diadematus (European garden spider).